The primary structure comprises 1541 residues: ATP-binding cassette sub-family C member 2 (1541 aa).

Residues 1–26 (MDKFCNSTFWDLSLLESPEADLPLCF) lie on the Extracellular side of the membrane. A glycan (N-linked (GlcNAc...) asparagine) is linked at N6. Residues 27–47 (EQTVLVWIPLGFLWLLAPWQL) form a helical membrane-spanning segment. At 48–67 (YSVYRSRTKRSSITKFYLAK) the chain is on the cytoplasmic side. The chain crosses the membrane as a helical span at residues 68–88 (QVFVVFLLILAAIDLSLALTE). Residues 89–92 (DTGQ) lie on the Extracellular side of the membrane. A helical membrane pass occupies residues 93–113 (ATVPPVRYTNPILYLCTWLLV). The Cytoplasmic portion of the chain corresponds to 114–125 (LAVQHSRQWCVR). The chain crosses the membrane as a helical span at residues 126 to 146 (KNSWFLSLFWILSVLCGVFQF). The Extracellular segment spans residues 147–164 (QTLIRALLKDSKSNMAYS). The chain crosses the membrane as a helical span at residues 165-185 (YLFFVSYGFQIVLLILTAFSG). Topologically, residues 186 to 309 (PSDSTQTPSV…DYPKSWLIKS (124 aa)) are cytoplasmic. A phosphoserine mark is found at S279 and S281. A helical membrane pass occupies residues 310–330 (LFKTFHVVILKSFILKLIHDL). One can recognise an ABC transmembrane type-1 1 domain in the interval 318–601 (ILKSFILKLI…LPMVTSSILQ (284 aa)). At 331 to 356 (LVFLNPQLLKLLIGFVKSSNSYVWFG) the chain is on the extracellular side. Residues 357–377 (YICAILMFAVTLIQSFCLQSY) form a helical membrane-spanning segment. Over 378–433 (FQHCFVLGMCVRTTVMSSIYKKALTLSNLARKQYTIGETVNLMSVDSQKLMDATNY) the chain is Cytoplasmic. Residues 434–454 (MQLVWSSVIQITLSIFFLWRE) traverse the membrane as a helical segment. The Extracellular segment spans residues 455–457 (LGP). The helical transmembrane segment at 458–478 (SILAGVGVMVLLIPVNGVLAT) threads the bilayer. Residues 479-540 (KIRNIQVQNM…NLLRFGQLQS (62 aa)) are Cytoplasmic-facing. Residues 541-561 (LLIFILQITPILVSVVTFSVY) form a helical membrane-spanning segment. Over 562–583 (VLVDSANVLNAEKAFTSITLFN) the chain is Extracellular. Residues 584–604 (ILRFPLSMLPMVTSSILQASV) traverse the membrane as a helical segment. Topologically, residues 605–967 (SVDRLERYLG…VKFSIYLKYL (363 aa)) are cytoplasmic. In terms of domain architecture, ABC transporter 1 spans 633-857 (VKFSEASFTW…KGVFARNWKT (225 aa)). 667–674 (GTVGSGKS) serves as a coordination point for ATP. 2 disordered regions span residues 862–881 (SGPE…DDDD) and 901–923 (RENS…GKSL). S874 carries the post-translational modification Phosphoserine. Positions 906–915 (RRTLSRSSRS) are enriched in low complexity. Residues S922 and S926 each carry the phosphoserine modification. The helical transmembrane segment at 968–988 (QAVGWWSILFIILFYGLNNVA) threads the bilayer. One can recognise an ABC transmembrane type-1 2 domain in the interval 975–1260 (ILFIILFYGL…LVRMTSEAET (286 aa)). At 989–1029 (FIGSNLWLSAWTSDSDNLNGTNNSSSHRDMRIGVFGALGLA) the chain is on the extracellular side. N1007, N1010, and N1011 each carry an N-linked (GlcNAc...) asparagine glycan. Residues 1030–1050 (QGICLLISTLWSIYACRNASK) form a helical membrane-spanning segment. The Cytoplasmic segment spans residues 1051–1093 (ALHGQLLTNILRAPMRFFDTTPTGRIVNRFSGDISTVDDLLPQ). A helical transmembrane segment spans residues 1094–1114 (TLRSWMMCFFGIAGTLVMICM). Position 1115 (A1115) is a topological domain, extracellular. A helical membrane pass occupies residues 1116-1136 (TPVFAIIIIPLSILYISVQVF). Over 1137–1207 (YVATSRQLRR…TSNRWLAIRL (71 aa)) the chain is Cytoplasmic. A helical transmembrane segment spans residues 1208–1228 (ELVGNLVVFCSALLLVIYRKT). Over 1229–1230 (LT) the chain is Extracellular. The chain crosses the membrane as a helical span at residues 1231 to 1251 (GDVVGFVLSNALNITQTLNWL). Residues 1252–1541 (VRMTSEAETN…GIENVNHTEL (290 aa)) lie on the Cytoplasmic side of the membrane. The 235-residue stretch at 1296–1530 (IQFNNYQVRY…RGSFYLMAKE (235 aa)) folds into the ABC transporter 2 domain. 1330–1337 (GRTGAGKS) contacts ATP. S1434 carries the post-translational modification Phosphoserine.

This sequence belongs to the ABC transporter superfamily. ABCC family. Conjugate transporter (TC 3.A.1.208) subfamily. As to expression, mainly expressed in the liver.

The protein resides in the apical cell membrane. The enzyme catalyses an S-substituted glutathione(in) + ATP + H2O = an S-substituted glutathione(out) + ADP + phosphate + H(+). The catalysed reaction is taurolithocholate 3-sulfate(in) + ATP + H2O = taurolithocholate 3-sulfate(out) + ADP + phosphate + H(+). It carries out the reaction ATP + H2O + xenobioticSide 1 = ADP + phosphate + xenobioticSide 2.. It catalyses the reaction 17beta-estradiol 17-O-(beta-D-glucuronate)(in) + ATP + H2O = 17beta-estradiol 17-O-(beta-D-glucuronate)(out) + ADP + phosphate + H(+). The enzyme catalyses leukotriene C4(in) + ATP + H2O = leukotriene C4(out) + ADP + phosphate + H(+). The catalysed reaction is (4Z,15Z)-bilirubin IXalpha C8-beta-D-glucuronoside(in) + ATP + H2O = (4Z,15Z)-bilirubin IXalpha C8-beta-D-glucuronoside(out) + ADP + phosphate + H(+). It carries out the reaction (4Z,15Z)-bilirubin IXalpha C8,C12-beta-D-bisglucuronoside(in) + ATP + H2O = (4Z,15Z)-bilirubin IXalpha C8,C12-beta-D-bisglucuronoside(out) + ADP + phosphate + H(+). ATP-dependent transporter of the ATP-binding cassette (ABC) family that binds and hydrolyzes ATP to enable active transport of various substrates including many drugs, toxicants and endogenous compound across cell membranes. Transports a wide variety of conjugated organic anions such as sulfate-, glucuronide- and glutathione (GSH)-conjugates of endo- and xenobiotics substrates. Mediates hepatobiliary excretion of mono- and bis-glucuronidated bilirubin molecules and therefore play an important role in bilirubin detoxification. Also mediates hepatobiliary excretion of others glucuronide conjugates such as 17beta-estradiol 17-glucosiduronic acid and leukotriene C4. Transports sulfated bile salt such as taurolithocholate sulfate. Transports various anticancer drugs, such as anthracycline, vinca alkaloid and methotrexate and HIV-drugs such as protease inhibitors. The polypeptide is ATP-binding cassette sub-family C member 2 (Rattus norvegicus (Rat)).